The sequence spans 202 residues: dITP/XTP pyrophosphatase (202 aa).

8 to 13 (TKNMGK) serves as a coordination point for substrate. Positions 41 and 70 each coordinate Mg(2+). Asp-70 serves as the catalytic Proton acceptor. Substrate contacts are provided by residues Ser-71, 155 to 158 (FGYD), Lys-178, and 183 to 184 (HR).

This sequence belongs to the HAM1 NTPase family. In terms of assembly, homodimer. It depends on Mg(2+) as a cofactor.

The catalysed reaction is XTP + H2O = XMP + diphosphate + H(+). It carries out the reaction dITP + H2O = dIMP + diphosphate + H(+). The enzyme catalyses ITP + H2O = IMP + diphosphate + H(+). Functionally, pyrophosphatase that catalyzes the hydrolysis of nucleoside triphosphates to their monophosphate derivatives, with a high preference for the non-canonical purine nucleotides XTP (xanthosine triphosphate), dITP (deoxyinosine triphosphate) and ITP. Seems to function as a house-cleaning enzyme that removes non-canonical purine nucleotides from the nucleotide pool, thus preventing their incorporation into DNA/RNA and avoiding chromosomal lesions. The protein is dITP/XTP pyrophosphatase of Bacillus anthracis.